A 204-amino-acid chain; its full sequence is Superoxide dismutase [Mn] (204 aa).

H29, H84, D167, and H171 together coordinate Mn(2+).

The protein belongs to the iron/manganese superoxide dismutase family. Homotetramer. It depends on Mn(2+) as a cofactor.

The enzyme catalyses 2 superoxide + 2 H(+) = H2O2 + O2. Functionally, destroys superoxide anion radicals which are normally produced within the cells and which are toxic to biological systems. The chain is Superoxide dismutase [Mn] (sodA) from Thermus aquaticus.